A 572-amino-acid chain; its full sequence is Urease subunit alpha (572 aa).

One can recognise a Urease domain in the interval 134-572 (GGIDAHVHMI…VSLGQLYFFS (439 aa)). Residues His139, His141, and Lys222 each contribute to the Ni(2+) site. Lys222 carries the N6-carboxylysine modification. Substrate is bound at residue His224. His251 and His277 together coordinate Ni(2+). The active-site Proton donor is His325. Asp365 is a binding site for Ni(2+).

The protein belongs to the metallo-dependent hydrolases superfamily. Urease alpha subunit family. In terms of assembly, heterotrimer of UreA (gamma), UreB (beta) and UreC (alpha) subunits. Three heterotrimers associate to form the active enzyme. Requires Ni cation as cofactor. In terms of processing, carboxylation allows a single lysine to coordinate two nickel ions.

It is found in the cytoplasm. It carries out the reaction urea + 2 H2O + H(+) = hydrogencarbonate + 2 NH4(+). It participates in nitrogen metabolism; urea degradation; CO(2) and NH(3) from urea (urease route): step 1/1. This Laribacter hongkongensis (strain HLHK9) protein is Urease subunit alpha.